The chain runs to 260 residues: Acetyl-coenzyme A carboxylase carboxyl transferase subunit alpha (260 aa).

Residues 1-235 form the CoA carboxyltransferase C-terminal domain; sequence MSAYDKVMAA…SNKILHSINK (235 aa).

It belongs to the AccA family. Acetyl-CoA carboxylase is a heterohexamer composed of biotin carboxyl carrier protein (AccB), biotin carboxylase (AccC) and two subunits each of ACCase subunit alpha (AccA) and ACCase subunit beta (AccD).

The protein resides in the cytoplasm. The catalysed reaction is N(6)-carboxybiotinyl-L-lysyl-[protein] + acetyl-CoA = N(6)-biotinyl-L-lysyl-[protein] + malonyl-CoA. The protein operates within lipid metabolism; malonyl-CoA biosynthesis; malonyl-CoA from acetyl-CoA: step 1/1. Functionally, component of the acetyl coenzyme A carboxylase (ACC) complex. First, biotin carboxylase catalyzes the carboxylation of biotin on its carrier protein (BCCP) and then the CO(2) group is transferred by the carboxyltransferase to acetyl-CoA to form malonyl-CoA. In Ruminiclostridium cellulolyticum (strain ATCC 35319 / DSM 5812 / JCM 6584 / H10) (Clostridium cellulolyticum), this protein is Acetyl-coenzyme A carboxylase carboxyl transferase subunit alpha.